A 151-amino-acid chain; its full sequence is Nucleoside diphosphate kinase (151 aa).

ATP is bound by residues lysine 11, phenylalanine 59, arginine 87, threonine 93, arginine 104, and asparagine 114. The active-site Pros-phosphohistidine intermediate is histidine 117.

It belongs to the NDK family. In terms of assembly, homotetramer. Mg(2+) is required as a cofactor.

It is found in the cytoplasm. The enzyme catalyses a 2'-deoxyribonucleoside 5'-diphosphate + ATP = a 2'-deoxyribonucleoside 5'-triphosphate + ADP. It carries out the reaction a ribonucleoside 5'-diphosphate + ATP = a ribonucleoside 5'-triphosphate + ADP. Functionally, major role in the synthesis of nucleoside triphosphates other than ATP. The ATP gamma phosphate is transferred to the NDP beta phosphate via a ping-pong mechanism, using a phosphorylated active-site intermediate. This chain is Nucleoside diphosphate kinase, found in Prochlorococcus marinus (strain MIT 9211).